The chain runs to 374 residues: LRR repeats and ubiquitin-like domain-containing protein At2g30105 (374 aa).

The Ubiquitin-like domain occupies Ile-13–His-87. 9 LRR repeats span residues Trp-128–Cys-151, Gly-152–Phe-175, Ser-177–Ser-200, Leu-201–Leu-224, Thr-225–Thr-248, Leu-250–Cys-270, Phe-272–Leu-293, Arg-294–Met-316, and Leu-318–Gly-340.

The sequence is that of LRR repeats and ubiquitin-like domain-containing protein At2g30105 from Arabidopsis thaliana (Mouse-ear cress).